Here is a 413-residue protein sequence, read N- to C-terminus: Multifunctional CCA protein (413 aa).

2 residues coordinate ATP: glycine 8 and arginine 11. CTP contacts are provided by glycine 8 and arginine 11. 2 residues coordinate Mg(2+): aspartate 21 and aspartate 23. Residues arginine 91, arginine 137, and arginine 140 each coordinate ATP. Arginine 91, arginine 137, and arginine 140 together coordinate CTP. Residues 228-329 enclose the HD domain; it reads TGIHTLMVLE…VKIFDKADLW (102 aa).

It belongs to the tRNA nucleotidyltransferase/poly(A) polymerase family. Bacterial CCA-adding enzyme type 1 subfamily. In terms of assembly, monomer. Can also form homodimers and oligomers. Requires Mg(2+) as cofactor. Ni(2+) serves as cofactor.

It catalyses the reaction a tRNA precursor + 2 CTP + ATP = a tRNA with a 3' CCA end + 3 diphosphate. The catalysed reaction is a tRNA with a 3' CCA end + 2 CTP + ATP = a tRNA with a 3' CCACCA end + 3 diphosphate. Functionally, catalyzes the addition and repair of the essential 3'-terminal CCA sequence in tRNAs without using a nucleic acid template. Adds these three nucleotides in the order of C, C, and A to the tRNA nucleotide-73, using CTP and ATP as substrates and producing inorganic pyrophosphate. tRNA 3'-terminal CCA addition is required both for tRNA processing and repair. Also involved in tRNA surveillance by mediating tandem CCA addition to generate a CCACCA at the 3' terminus of unstable tRNAs. While stable tRNAs receive only 3'-terminal CCA, unstable tRNAs are marked with CCACCA and rapidly degraded. The protein is Multifunctional CCA protein of Shewanella sediminis (strain HAW-EB3).